The sequence spans 227 residues: MICOS complex subunit MIC19 (227 aa).

Gly2 carries N-myristoyl glycine lipidation. A Phosphoserine modification is found at Ser29. The segment at 34-60 (DRMKETSPSGPKSQRYSGTYGASVSDE) is disordered. Residues 39 to 55 (TSPSGPKSQRYSGTYGA) are compositionally biased toward polar residues. Tyr49 carries the post-translational modification Phosphotyrosine. 3 positions are modified to phosphoserine: Ser50, Ser56, and Ser58. Residue Lys142 is modified to N6-acetyllysine. Residues 180–222 (HPVCADLQAQILQCYRQNTQQTLSCSALASQYMRCVNQAKQST) enclose the CHCH domain. 2 consecutive short sequence motifs (cx9C motif) follow at residues 183-193 (CADLQAQILQC) and 204-214 (CSALASQYMRC). 2 disulfides stabilise this stretch: Cys183–Cys214 and Cys193–Cys204.

It belongs to the MICOS complex subunit Mic19 family. Metazoan Mic19 subfamily. Component of the mitochondrial contact site and cristae organizing system (MICOS) complex, composed of at least MICOS10/MIC10, CHCHD3/MIC19, CHCHD6/MIC25, APOOL/MIC27, IMMT/MIC60, APOO/MIC23/MIC26 and MICOS13/MIC13. This complex was also known under the names MINOS or MitOS complex. The MICOS complex associates with mitochondrial outer membrane proteins SAMM50, MTX1 and MTX2 (together described as components of the mitochondrial outer membrane sorting assembly machinery (SAM) complex) and DNAJC11, mitochondrial inner membrane protein TMEM11 and with HSPA9. The MICOS and SAM complexes together with DNAJC11 are part of a large protein complex spanning both membranes termed the mitochondrial intermembrane space bridging (MIB) complex. Interacts with HSPA1A/HSPA1B and OPA1, preferentially with the soluble OPA1 form. Interacts with IMMT/MIC60.

The protein localises to the mitochondrion inner membrane. Its subcellular location is the cytoplasm. It is found in the nucleus. It localises to the mitochondrion. Its function is as follows. Component of the MICOS complex, a large protein complex of the mitochondrial inner membrane that plays crucial roles in the maintenance of crista junctions, inner membrane architecture, and formation of contact sites to the outer membrane. Has also been shown to function as a transcription factor which binds to the BAG1 promoter and represses BAG1 transcription. Plays an important role in the maintenance of the MICOS complex stability and the mitochondrial cristae morphology. This is MICOS complex subunit MIC19 (CHCHD3) from Bos taurus (Bovine).